We begin with the raw amino-acid sequence, 171 residues long: Photosystem I assembly protein Ycf3 (171 aa).

TPR repeat units lie at residues 35–68, 72–105, and 120–153; these read AFTYYRDGMSAQAEGEYAEALQNYYEAMRLEVDA, SYILYNIGLIHTSNGEHAKALEYYYQALERNPYL, and GEQAIESGNSRISNLLFDKAADYWKEAIRLAPTN.

Belongs to the Ycf3 family.

It localises to the plastid. The protein localises to the chloroplast thylakoid membrane. In terms of biological role, essential for the assembly of the photosystem I (PSI) complex. May act as a chaperone-like factor to guide the assembly of the PSI subunits. In Nephroselmis olivacea (Green alga), this protein is Photosystem I assembly protein Ycf3.